Reading from the N-terminus, the 286-residue chain is Urease accessory protein UreD 2 (286 aa).

It belongs to the UreD family. UreD, UreF and UreG form a complex that acts as a GTP-hydrolysis-dependent molecular chaperone, activating the urease apoprotein by helping to assemble the nickel containing metallocenter of UreC. The UreE protein probably delivers the nickel.

The protein localises to the cytoplasm. Required for maturation of urease via the functional incorporation of the urease nickel metallocenter. The polypeptide is Urease accessory protein UreD 2 (Bradyrhizobium sp. (strain ORS 278)).